The sequence spans 316 residues: MRILDEAVIPELPNYYRGKVRENYDLPDGNRIIISTDRLSAFDQILTCIPYKGQVLTQTARYWFEQTKDICPNHVVSYPDPNVVIGKRLDILPVEVVVRGYLAGTTGTSILTLYKKGERQMYGMSLPDGMKDNQILPEPVITPTSKAFDGGHDEPLTPSEIVEKKLLTQEQWDTLSRYALALFRHGQEIAAKQGLILVDTKYEFGTDENGTIILADEIHTPDSSRYWMADSYDESFREGKRPASFDKDFVRAWVGERCDPYKDAVPKIPEDLVLQTSQVYIDAYERITGQRFVPDDSGETPLARVRRNLEPFFPGV.

It belongs to the SAICAR synthetase family.

The catalysed reaction is 5-amino-1-(5-phospho-D-ribosyl)imidazole-4-carboxylate + L-aspartate + ATP = (2S)-2-[5-amino-1-(5-phospho-beta-D-ribosyl)imidazole-4-carboxamido]succinate + ADP + phosphate + 2 H(+). It participates in purine metabolism; IMP biosynthesis via de novo pathway; 5-amino-1-(5-phospho-D-ribosyl)imidazole-4-carboxamide from 5-amino-1-(5-phospho-D-ribosyl)imidazole-4-carboxylate: step 1/2. This is Putative phosphoribosylaminoimidazole-succinocarboxamide synthase 2 (purC2) from Agrobacterium fabrum (strain C58 / ATCC 33970) (Agrobacterium tumefaciens (strain C58)).